A 281-amino-acid polypeptide reads, in one-letter code: Pseudouridine-5'-phosphate glycosidase (281 aa).

The Proton donor role is filled by E9. Residues K69 and V89 each coordinate substrate. D118 contacts Mn(2+). S120–D122 lines the substrate pocket. The Nucleophile role is filled by K139.

It belongs to the pseudouridine-5'-phosphate glycosidase family. Homotrimer. Mn(2+) serves as cofactor.

The catalysed reaction is D-ribose 5-phosphate + uracil = psi-UMP + H2O. Catalyzes the reversible cleavage of pseudouridine 5'-phosphate (PsiMP) to ribose 5-phosphate and uracil. Functions biologically in the cleavage direction, as part of a pseudouridine degradation pathway. This chain is Pseudouridine-5'-phosphate glycosidase, found in Thermus thermophilus (strain ATCC BAA-163 / DSM 7039 / HB27).